The primary structure comprises 529 residues: Membrane-bound lytic murein transglycosylase F (529 aa).

The N-terminal stretch at 1–27 (MPIFNLHQLRNFLFIIATTLFLSACQI) is a signal peptide. The non-LT domain stretch occupies residues 28–287 (ESKPTSELDQ…RLEEKYIGHI (260 aa)). The LT domain stretch occupies residues 288–529 (GSFDYVDTRA…QATLTTEVQP (242 aa)). Glu-332 is an active-site residue. Positions 510–529 (EALSPDVGVSQATLTTEVQP) are disordered. Polar residues predominate over residues 519–529 (SQATLTTEVQP).

This sequence in the N-terminal section; belongs to the bacterial solute-binding protein 3 family. In the C-terminal section; belongs to the transglycosylase Slt family.

It localises to the cell outer membrane. It catalyses the reaction Exolytic cleavage of the (1-&gt;4)-beta-glycosidic linkage between N-acetylmuramic acid (MurNAc) and N-acetylglucosamine (GlcNAc) residues in peptidoglycan, from either the reducing or the non-reducing ends of the peptidoglycan chains, with concomitant formation of a 1,6-anhydrobond in the MurNAc residue.. Its function is as follows. Murein-degrading enzyme that degrades murein glycan strands and insoluble, high-molecular weight murein sacculi, with the concomitant formation of a 1,6-anhydromuramoyl product. Lytic transglycosylases (LTs) play an integral role in the metabolism of the peptidoglycan (PG) sacculus. Their lytic action creates space within the PG sacculus to allow for its expansion as well as for the insertion of various structures such as secretion systems and flagella. This chain is Membrane-bound lytic murein transglycosylase F, found in Vibrio vulnificus (strain CMCP6).